A 780-amino-acid chain; its full sequence is Cullin-5 (780 aa).

The residue at position 34 (Ser-34) is a Phosphoserine. Phosphothreonine is present on Thr-210. The Cullin neddylation domain maps to 711–772; it reads RILRTQEAII…HKYIRRDESD (62 aa). Residue Lys-724 forms a Glycyl lysine isopeptide (Lys-Gly) (interchain with G-Cter in NEDD8) linkage.

Belongs to the cullin family. Component of multiple cullin-5-RING E3 ubiquitin-protein ligase complexes (ECS complexes, also named CRL5 complexes) formed of CUL5, Elongin BC (ELOB and ELOC), RNF7/RBX2 and a variable SOCS box domain-containing protein as substrate-specific recognition component. CUL5-containing ECS complexes specifically contain RNF7/RBX2, and not RBX1, as catalytic subunit. Component of the ECS(ASB2) complex with the substrate recognition component ASB2. Component of the ECS(ASB6) complex with the substrate recognition component ASB6. Component of the ECS(ASB7) complex with the substrate recognition component ASB7. Component of the ECS(ASB9) complex with the substrate recognition component ASB9. Component of the ECS(ASB11) complex with the substrate recognition component ASB11. Component of the ECS(ASB12) complex with the substrate recognition component ASB12. Component of the ECS(LRRC41) complex with the substrate recognition component LRRC41. Component of the ECS(SOCS1) complex with the substrate recognition component SOCS1. Component of the ECS(SOCS2) complex with the substrate recognition component SOCS2. Component of the ECS(WSB1) complex with the substrate recognition subunit WSB1. Component of the ECS(SOCS3) complex with the substrate recognition component SOCS3. Component of the ECS(SOCS7) complex with the substrate recognition component SOCS7. Component of the ECS(SPSB1) complex with the substrate recognition component SPSB1. Component of the ECS(SPSB3) complex with the substrate recognition component SPSB3. Component of the ECS(SPSB2) complex with the substrate recognition component SPSB2. Component of the ECS(SPSB4) complex with the substrate recognition component SPSB4. Component of the ECS(RAB40) complex with the substrate recognition subunit RAB40A, RAB40B or RAB40C. Component of the ECS(KLHDC1) complex with the substrate recognition component KLHDC1. Component of the ECS(PCMTD1) complex with the substrate recognition subunit PCMTD1. May also form complexes containing RBX1 and ELOA or VHL; additional evidence is however required to confirm this result in vivo. Interacts (when neddylated) with ARIH2; leading to activate the E3 ligase activity of ARIH2. Interacts with ERCC6; the interaction is induced by DNA damaging agents or inhibitors of RNA polymerase II elongation. Interacts with ELOA (via the BC-box). Interacts (unneddylated form) with DCUN1D1, DCUN1D2, DCUN1D3, DCUN1D4 and DCUN1D5; these interactions promote the cullin neddylation. Post-translationally, neddylated; which enhances the ubiquitination activity of ECS complexes and prevents binding of the inhibitor CAND1. Deneddylated via its interaction with the COP9 signalosome (CSN).

The protein localises to the nucleus. The protein operates within protein modification; protein ubiquitination. Functionally, core component of multiple cullin-5-RING E3 ubiquitin-protein ligase complexes (ECS complexes, also named CRL5 complexes), which mediate the ubiquitination and subsequent proteasomal degradation of target proteins. Acts a scaffold protein that contributes to catalysis through positioning of the substrate and the ubiquitin-conjugating enzyme. The functional specificity of the E3 ubiquitin-protein ligase complex depends on the variable SOCS box-containing substrate recognition component. Acts as a key regulator of neuron positioning during cortex development: component of various SOCS-containing ECS complexes, such as the ECS(SOCS7) complex, that regulate reelin signaling by mediating ubiquitination and degradation of DAB1. ECS(SOCS1) seems to direct ubiquitination of JAK2. The ECS(SOCS2) complex mediates the ubiquitination and subsequent proteasomal degradation of phosphorylated EPOR and GHR. The ECS(SPSB3) complex catalyzes ubiquitination of nuclear CGAS. ECS(KLHDC1) complex is part of the DesCEND (destruction via C-end degrons) pathway and mediates ubiquitination and degradation of truncated SELENOS selenoprotein produced by failed UGA/Sec decoding, which ends with a glycine. The ECS(ASB9) complex mediates ubiquitination and degradation of CKB. As part of some ECS complex, promotes 'Lys-11'-linked ubiquitination and degradation of BTRC. As part of a multisubunit ECS complex, polyubiquitinates monoubiquitinated POLR2A. As part of the ECS(RAB40C) complex, mediates ANKRD28 ubiquitination and degradation, thereby regulating protein phosphatase 6 (PP6) complex activity and focal adhesion assembly during cell migration. As part of the ECS(RAB40A) complex, mediates RHOU 'Lys-48'-linked ubiquitination and degradation, thus inhibiting focal adhesion disassembly during cell migration. As part of the ECS(RAB40B) complex, mediates LIMA1/EPLIN and RAP2 ubiquitination, thereby regulating actin cytoskeleton dynamics and stress fiber formation during cell migration. May form a cell surface vasopressin receptor. This Pongo abelii (Sumatran orangutan) protein is Cullin-5.